The following is a 66-amino-acid chain: Sec-independent protein translocase protein TatA (66 aa).

The helical transmembrane segment at 1 to 21 threads the bilayer; it reads MSIGIWQIAIVVILVVLLFGR. A disordered region spans residues 43–66; it reads ATDITDEPEPKNVSENNQDSKDKE. Residues 50 to 66 are compositionally biased toward basic and acidic residues; that stretch reads PEPKNVSENNQDSKDKE.

The protein belongs to the TatA/E family. In terms of assembly, the Tat system comprises two distinct complexes: a TatABC complex, containing multiple copies of TatA, TatB and TatC subunits, and a separate TatA complex, containing only TatA subunits. Substrates initially bind to the TatABC complex, which probably triggers association of the separate TatA complex to form the active translocon.

It localises to the cell inner membrane. Part of the twin-arginine translocation (Tat) system that transports large folded proteins containing a characteristic twin-arginine motif in their signal peptide across membranes. TatA could form the protein-conducting channel of the Tat system. The polypeptide is Sec-independent protein translocase protein TatA (Pelagibacter ubique (strain HTCC1062)).